Consider the following 248-residue polypeptide: Mannose-binding protein C (248 aa).

An N-terminal signal peptide occupies residues 1–20 (MSLFPSLPLLLLSVVATSYS). Residues 42–99 (GINGFPGKDGRDGTKGEKGEPGQGLRGLQGPPGKLGPPGNPGPSGSPGPKGQKGDPGE) enclose the Collagen-like domain. Positions 43–111 (INGFPGKDGR…DCDSSLAASE (69 aa)) are disordered. Residue P47 is modified to 4-hydroxyproline. The segment covering 49-61 (KDGRDGTKGEKGE) has biased composition (basic and acidic residues). 4-hydroxyproline occurs at positions 73, 79, 82, and 88. Positions 75 to 87 (KLGPPGNPGPSGS) are enriched in pro residues. Positions 112-130 (RKALQTEMAHIKKWLTFSL) form a coiled coil. Residues 134-245 (VGNKFFLTNG…CSSSHLALCE (112 aa)) enclose the C-type lectin domain. Cystine bridges form between C155–C244 and C222–C236.

Oligomeric complex of 3 or more homotrimers. Interacts with MASP1 and MASP2. Interacts with MEP1A and MEP1B and may inhibit their catalytic activity. Hydroxylation on proline residues within the sequence motif, GXPG, is most likely to be 4-hydroxy as this fits the requirement for 4-hydroxylation in vertebrates.

Its subcellular location is the secreted. Its function is as follows. Calcium-dependent lectin involved in innate immune defense. Binds mannose, fucose and N-acetylglucosamine on different microorganisms and activates the lectin complement pathway. Binds to late apoptotic cells, as well as to apoptotic blebs and to necrotic cells, but not to early apoptotic cells, facilitating their uptake by macrophages. The chain is Mannose-binding protein C (MBL2) from Trachypithecus obscurus (Dusky leaf-monkey).